Here is a 478-residue protein sequence, read N- to C-terminus: uncharacterized protein (478 aa).

Positions 174–366 (RQVLAAAGVP…LIGEHIKLAI (193 aa)) constitute an ATP-grasp domain. 214-219 (GSGSRG) is a binding site for ATP. Arg-339 is an active-site residue.

This is an uncharacterized protein from Sinorhizobium fredii (strain NBRC 101917 / NGR234).